The chain runs to 187 residues: Putative adenylate kinase (187 aa).

Residues Gly10, Gly12, Lys13, Thr14, and Ile15 each contribute to the ATP site. The interval 30–53 (SLSQFVIENKLYTEYDELRQSYII) is NMP. The interval 103–113 (GRGWADIKVAE) is LID. Arg104 contributes to the ATP binding site.

The protein belongs to the adenylate kinase family. AK6 subfamily. As to quaternary structure, interacts with uS11. Not a structural component of 40S pre-ribosomes, but transiently interacts with them by binding to uS11.

The enzyme catalyses AMP + ATP = 2 ADP. It carries out the reaction ATP + H2O = ADP + phosphate + H(+). Functionally, broad-specificity nucleoside monophosphate (NMP) kinase that catalyzes the reversible transfer of the terminal phosphate group between nucleoside triphosphates and monophosphates. Also has ATPase activity. Involved in the late maturation steps of the 30S ribosomal particles, specifically 16S rRNA maturation. While NMP activity is not required for ribosome maturation, ATPase activity is. Associates transiently with small ribosomal subunit protein uS11. ATP hydrolysis breaks the interaction with uS11. May temporarily remove uS11 from the ribosome to enable a conformational change of the ribosomal RNA that is needed for the final maturation step of the small ribosomal subunit. The sequence is that of Putative adenylate kinase from Saccharolobus islandicus (strain L.S.2.15 / Lassen #1) (Sulfolobus islandicus).